A 640-amino-acid polypeptide reads, in one-letter code: Threonine--tRNA ligase (640 aa).

One can recognise a TGS domain in the interval 1–61 (MPTITLPDGS…ENDASLQIIT (61 aa)). Residues 242-533 (DHRKIGKRLG…LIEHYEGAFP (292 aa)) form a catalytic region. 3 residues coordinate Zn(2+): cysteine 333, histidine 384, and histidine 510.

The protein belongs to the class-II aminoacyl-tRNA synthetase family. In terms of assembly, homodimer. It depends on Zn(2+) as a cofactor.

Its subcellular location is the cytoplasm. The catalysed reaction is tRNA(Thr) + L-threonine + ATP = L-threonyl-tRNA(Thr) + AMP + diphosphate + H(+). Functionally, catalyzes the attachment of threonine to tRNA(Thr) in a two-step reaction: L-threonine is first activated by ATP to form Thr-AMP and then transferred to the acceptor end of tRNA(Thr). Also edits incorrectly charged L-seryl-tRNA(Thr). This Pseudomonas syringae pv. tomato (strain ATCC BAA-871 / DC3000) protein is Threonine--tRNA ligase.